A 247-amino-acid polypeptide reads, in one-letter code: UDP-2,3-diacylglucosamine hydrolase (247 aa).

The Mn(2+) site is built by Asp8, His10, Asp41, Asn79, and His114. Asn79–Arg80 is a substrate binding site. Substrate contacts are provided by Asp122, Ser160, Asp171, Asn174, and His202. Residues His202 and His204 each contribute to the Mn(2+) site.

The protein belongs to the LpxH family. Mn(2+) serves as cofactor.

Its subcellular location is the cell inner membrane. It catalyses the reaction UDP-2-N,3-O-bis[(3R)-3-hydroxytetradecanoyl]-alpha-D-glucosamine + H2O = 2-N,3-O-bis[(3R)-3-hydroxytetradecanoyl]-alpha-D-glucosaminyl 1-phosphate + UMP + 2 H(+). Its pathway is glycolipid biosynthesis; lipid IV(A) biosynthesis; lipid IV(A) from (3R)-3-hydroxytetradecanoyl-[acyl-carrier-protein] and UDP-N-acetyl-alpha-D-glucosamine: step 4/6. Functionally, hydrolyzes the pyrophosphate bond of UDP-2,3-diacylglucosamine to yield 2,3-diacylglucosamine 1-phosphate (lipid X) and UMP by catalyzing the attack of water at the alpha-P atom. Involved in the biosynthesis of lipid A, a phosphorylated glycolipid that anchors the lipopolysaccharide to the outer membrane of the cell. The polypeptide is UDP-2,3-diacylglucosamine hydrolase (Xanthomonas oryzae pv. oryzae (strain MAFF 311018)).